Here is a 224-residue protein sequence, read N- to C-terminus: Ribonuclease HII (224 aa).

One can recognise an RNase H type-2 domain in the interval Arg-21–Gln-223. The a divalent metal cation site is built by Asp-27, Glu-28, and Asp-124.

This sequence belongs to the RNase HII family. The cofactor is Mn(2+). Mg(2+) serves as cofactor.

The protein resides in the cytoplasm. The enzyme catalyses Endonucleolytic cleavage to 5'-phosphomonoester.. Functionally, endonuclease that specifically degrades the RNA of RNA-DNA hybrids. This is Ribonuclease HII from Roseiflexus castenholzii (strain DSM 13941 / HLO8).